The following is a 758-amino-acid chain: Aspartyl/asparaginyl beta-hydroxylase (758 aa).

The tract at residues 1–46 (MAQRKNAKSSGNSSSSGSGSGSTSAGSSSPGARRETKHGGHKNGRK) is disordered. Residues 1–53 (MAQRKNAKSSGNSSSSGSGSGSTSAGSSSPGARRETKHGGHKNGRKGGLSGTS) are Cytoplasmic-facing. Low complexity predominate over residues 9 to 31 (SSGNSSSSGSGSGSTSAGSSSPG). At serine 14 the chain carries Phosphoserine. A helical; Signal-anchor for type II membrane protein transmembrane segment spans residues 54 to 74 (FFTWFMVIALLGVWTSVAVVW). N-linked (GlcNAc...) asparagine glycosylation is present at leucine 64. Residues 75 to 758 (FDLVDYEEVL…PQQRRSLPAI (684 aa)) lie on the Lumenal side of the membrane. Ca(2+) contacts are provided by aspartate 91, aspartate 93, aspartate 95, aspartate 97, and aspartate 102. Disordered regions lie at residues 111–140 (ERSTSEPAVPPEEAEPHTEPEEQVPVEAEP) and 304–324 (EEQQEVPPETNRKTDDPEQKA). The segment covering 313 to 324 (TNRKTDDPEQKA) has biased composition (basic and acidic residues). The TPR 1 repeat unit spans residues 341–374 (IKAELDAAEKLRKRGKIEEAVNAFKELVRKYPQS). The N-linked (GlcNAc...) asparagine glycan is linked to asparagine 452. TPR repeat units lie at residues 454–487 (TSLKNDLGVGYLLIGDNDNAKKVYEEVLSVTPND), 489–521 (FAKVHYGFILKAQNKIAESIPYLKEGIESGDPG), and 525–557 (GRFYFHLGDAMQRVGNKEAYKWYELGHKRGHFA). Tryptophan 625 is a 2-oxoglutarate binding site. A disulfide bridge links cysteine 641 with cysteine 648. Serine 668 contributes to the 2-oxoglutarate binding site. Histidine 679 serves as a coordination point for Fe cation. 688–690 (RMH) is a 2-oxoglutarate binding site. An N-linked (GlcNAc...) asparagine glycan is attached at asparagine 706. Fe cation is bound at residue histidine 725. Arginine 735 lines the 2-oxoglutarate pocket.

This sequence belongs to the aspartyl/asparaginyl beta-hydroxylase family. In terms of assembly, monomer. Isoform 8 interacts with ORAI1 and STIM1. Isoform 4 interacts with CASQ2. The cofactor is Fe cation. In terms of tissue distribution, isoform 1 is detected in all tissues tested. Isoform 8 is mainly expressed in pancreas, heart, brain, kidney and liver. Isoform 8 is expressed in kidney (at protein level).

The protein resides in the endoplasmic reticulum membrane. It localises to the sarcoplasmic reticulum membrane. The catalysed reaction is L-aspartyl-[protein] + 2-oxoglutarate + O2 = 3-hydroxy-L-aspartyl-[protein] + succinate + CO2. Specifically hydroxylates an Asp or Asn residue in certain epidermal growth factor-like (EGF) domains of a number of proteins. Its function is as follows. Membrane-bound Ca(2+)-sensing protein, which is a structural component of the ER-plasma membrane junctions. Isoform 8 regulates the activity of Ca(+2) released-activated Ca(+2) (CRAC) channels in T-cells. The chain is Aspartyl/asparaginyl beta-hydroxylase (ASPH) from Homo sapiens (Human).